The sequence spans 576 residues: 4-alpha-glucanotransferase, chloroplastic/amyloplastic (576 aa).

The N-terminal 52 residues, 1-52 (MAIHTCFSLIPSSFSSPKLPYPKNTTFQSPIPKLSRPTFMFDRKGSFQNGTA), are a transit peptide targeting the chloroplast.

This sequence belongs to the disproportionating enzyme family. In terms of tissue distribution, present in leaves, stems, roots, and stolons but is most abundant in developing and mature tubers.

It is found in the plastid. The protein localises to the chloroplast. The protein resides in the amyloplast. The enzyme catalyses Transfers a segment of a (1-&gt;4)-alpha-D-glucan to a new position in an acceptor, which may be glucose or a (1-&gt;4)-alpha-D-glucan.. In terms of biological role, may act during starch breakdown to convert small oligosaccharides into larger molecules upon which starch phosphorylase can act, or may change the structure of starch molecules and grain architecture by modifying chain length, or may generate from starch and glucose oligosaccharides which can serve either as primers for new starch phosphoenzyme. The protein is 4-alpha-glucanotransferase, chloroplastic/amyloplastic (DPEP) of Solanum tuberosum (Potato).